The primary structure comprises 199 residues: Recombination protein RecR (199 aa).

The segment at 58-73 adopts a C4-type zinc-finger fold; sequence CVRCGNITNADLCGIC. Positions 81–176 constitute a Toprim domain; that stretch reads GELCVVEDVA…QVTSLAQGVP (96 aa).

The protein belongs to the RecR family.

In terms of biological role, may play a role in DNA repair. It seems to be involved in an RecBC-independent recombinational process of DNA repair. It may act with RecF and RecO. This Cereibacter sphaeroides (strain ATCC 17029 / ATH 2.4.9) (Rhodobacter sphaeroides) protein is Recombination protein RecR.